The chain runs to 359 residues: Histidinol-phosphate aminotransferase (359 aa).

Lys-217 carries the N6-(pyridoxal phosphate)lysine modification.

Belongs to the class-II pyridoxal-phosphate-dependent aminotransferase family. Histidinol-phosphate aminotransferase subfamily. As to quaternary structure, homodimer. It depends on pyridoxal 5'-phosphate as a cofactor.

It catalyses the reaction L-histidinol phosphate + 2-oxoglutarate = 3-(imidazol-4-yl)-2-oxopropyl phosphate + L-glutamate. The protein operates within amino-acid biosynthesis; L-histidine biosynthesis; L-histidine from 5-phospho-alpha-D-ribose 1-diphosphate: step 7/9. The chain is Histidinol-phosphate aminotransferase from Salmonella heidelberg (strain SL476).